The chain runs to 578 residues: Acyl-CoA ligase AFT1-1 (578 aa).

ATP is bound by residues 210–218 (SSGTSGAQK), 350–355 (QCYGAT), Asp438, Arg457, and Lys554. Positions 281–350 (GVEDLLSIVE…RHHPTWKIKQ (70 aa)) are SBD1. The tract at residues 351 to 413 (CYGATEAGTA…VSSPSLAIGY (63 aa)) is SBD2. Positions 576–578 (SKI) match the Peroxisomal targeting signal type 1 motif.

It belongs to the ATP-dependent AMP-binding enzyme family.

The protein resides in the peroxisome. Its pathway is mycotoxin biosynthesis. Functionally, acyl-CoA ligase; part of the gene clusters that mediate the biosynthesis of the host-selective toxins (HSTs) AF-toxins responsible for Alternaria black spot of strawberry disease by the strawberry pathotype. AF-toxin I and III are valine derivatives of 2,3-dyhydroxy-isovaleric acid and 2-hydroxy-isovaleric acid respectively, while AF II is an isoleucine derivative of 2-hydroxy-valeric acid. These derivatives are bound to a 9,10-epoxy-8-hydroxy-9-methyl-decatrienoic acid (EDA) moiety. On cellular level, AF-toxins affect plasma membrane of susceptible cells and cause a sudden increase in loss of K(+) after a few minutes of toxin treatment. The aldo-keto reductase AFTS1 catalyzes the conversion of 2-keto-isovaleric acid (2-KIV) to 2-hydroxy-isovaleric acid (2-HIV) by reduction of its ketone to an alcohol. The acyl-CoA ligase AFT1, the hydrolase AFT2 and the enoyl-CoA hydratases AFT3 and AFT6, but also the polyketide synthase AFT9, the acyl-CoA dehydrogenase AFT10, the cytochrome P450 monooxygenase AFT11 and the oxidoreductase AFT12 are all involved in the biosynthesis of the AK-, AF- and ACT-toxin common EDA structural moiety. The exact role of each enzyme, and of additional enzymes identified within the AF-toxin clusters have still to be determined. In Alternaria alternata (Alternaria rot fungus), this protein is Acyl-CoA ligase AFT1-1.